A 332-amino-acid polypeptide reads, in one-letter code: Mitochondrial glycine transporter (332 aa).

Solcar repeat units lie at residues 11–94 (SSSY…LRQN), 121–205 (LSNL…LKKR), and 235–319 (TSAS…LIRR). The next 6 membrane-spanning stretches (helical) occupy residues 17 to 42 (FGAG…TRVQ), 69 to 95 (GTVP…RQNV), 127 to 152 (LTTG…VRYE), 180 to 203 (GFGA…EELK), 239 to 265 (INFG…KTRI), and 294 to 312 (GLGL…AWTI).

This sequence belongs to the mitochondrial carrier (TC 2.A.29) family. SLC25A38 subfamily.

It is found in the mitochondrion inner membrane. The enzyme catalyses glycine(in) = glycine(out). Functionally, mitochondrial glycine transporter that imports glycine into the mitochondrial matrix. Plays an important role in providing glycine for the first enzymatic step in heme biosynthesis, the condensation of glycine with succinyl-CoA to produce 5-aminolevulinate (ALA) in the mitochondrial matrix. The protein is Mitochondrial glycine transporter of Botryotinia fuckeliana (strain B05.10) (Noble rot fungus).